The following is a 768-amino-acid chain: MMDQARSAFSSLFGGEPLSYTRFSLARQVDGDNSHVEMKLAADEEENVDSNTRSNHIGVAKPKRLNGYVCYGIIAVITFFLIGFMIGYLAYCKRVESKTDCKTLVPTEPSETEETETFEAENFPQTPRLFWADLKILLSKGLDTTDFTRTIKMLNEDYAPREAGSQKDESLGFFIENQFREFKLSKVWHDEHFVKIQVKGSNAENSVTLVNTDSNSLVYPVESPEGYVAYSKATTVTGKLIFANFGTKKDFEDLKMPVNGSLVIVRAGKITFAEKVANAQSLDAIGVLIYMDRANFPIINADVPVFGHAHLGTGDPYTPGFPSFNHTQFPPSQSSGLPNIPVQTISRAGAEKLFGNMEQDCPLTWRTDFPCKLVSSPSKNVKLTVNNVLKEIKILNIFGVIKGFEEPDRYVIVGAQRDAWGPGAAKSSVGTSLLLNLAQILSDMVIKGQFKPSRSIVFASWSAGDFGAIGATEWLEGYLSSLHLKAFTYINLDKAVLGTSNFKVSASPLLYSLIEKMMQDVKNPVTGQSLYRDSNWINKVEKLSFDDAAFPFLAYSGIPAVSFCFCEDTDYPYLGTTMDTYDVLSKRVPQLNRMARAAAEVAGHLVIKLTIDFELNLNYEMYNDKILSFVREMNQFRVDIREMGLSLQWLYSARGDFFRATSRLTSDYRNVETRDKFVMREINDRIMKVEYHFLSPYVSPRESPFRHIFWGSGSHTLSALVEHLKLRQKNSSAFNQTLLKNQLALATWTIQGAANALSGDIWDIDNEF.

Topologically, residues 1–68 are cytoplasmic; sequence MMDQARSAFS…VAKPKRLNGY (68 aa). The mediates interaction with SH3BP4 stretch occupies residues 1–70; that stretch reads MMDQARSAFS…KPKRLNGYVC (70 aa). Phosphoserine is present on residues Ser-10 and Ser-19. Tyr-20 is modified (phosphotyrosine). The Endocytosis signal motif lies at 20-23; that stretch reads YTRF. Thr-21 carries the post-translational modification Phosphothreonine. Ser-24 carries the phosphoserine modification. Positions 61 to 64 match the Stop-transfer sequence motif; it reads KPKR. A helical membrane pass occupies residues 69-89; it reads VCYGIIAVITFFLIGFMIGYL. Cys-70 carries S-palmitoyl cysteine lipidation. Topologically, residues 90–768 are extracellular; that stretch reads AYCKRVESKT…GDIWDIDNEF (679 aa). The 91-residue stretch at 231 to 321 folds into the PA domain; the sequence is SKATTVTGKL…GTGDPYTPGF (91 aa). N-linked (GlcNAc...) asparagine glycosylation is found at Asn-259 and Asn-325. A ligand-binding region spans residues 577-768; the sequence is TMDTYDVLSK…GDIWDIDNEF (192 aa). The short motif at 654–656 is the Cell attachment site element; sequence RGD. 2 N-linked (GlcNAc...) asparagine glycosylation sites follow: Asn-730 and Asn-735.

It belongs to the peptidase M28 family. M28B subfamily. As to quaternary structure, homodimer; disulfide-linked. Binds one transferrin or HFE molecule per subunit. Interacts with SH3BP4. Interacts with SH3BP3. Interacts with STEAP3; facilitates TFRC endocytosis in erythroid precursor cells. Post-translationally, stearoylated by ZDHHC6 which inhibits TFRC-mediated activation of the JNK pathway and promotes mitochondrial fragmentation. Stearoylation does not affect iron uptake.

The protein resides in the cell membrane. The protein localises to the melanosome. Its function is as follows. Cellular uptake of iron occurs via receptor-mediated endocytosis of ligand-occupied transferrin receptor into specialized endosomes. Endosomal acidification leads to iron release. The apotransferrin-receptor complex is then recycled to the cell surface with a return to neutral pH and the concomitant loss of affinity of apotransferrin for its receptor. Transferrin receptor is necessary for development of erythrocytes and the nervous system. Positively regulates T and B cell proliferation through iron uptake. Acts as a lipid sensor that regulates mitochondrial fusion by regulating activation of the JNK pathway. When dietary levels of stearate (C18:0) are low, promotes activation of the JNK pathway, resulting in HUWE1-mediated ubiquitination and subsequent degradation of the mitofusin MFN2 and inhibition of mitochondrial fusion. When dietary levels of stearate (C18:0) are high, TFRC stearoylation inhibits activation of the JNK pathway and thus degradation of the mitofusin MFN2. Mediates uptake of NICOL1 into fibroblasts where it may regulate extracellular matrix production. The chain is Transferrin receptor protein 1 (TFRC) from Sus scrofa (Pig).